A 317-amino-acid polypeptide reads, in one-letter code: MGLTIGVDIGGTKIAAGVVDEEGNILSTHKVPTPTTPEAIVDAIASAVEGARVGHEIVAVGIGAAGYVNRQRSTVYFAPNIDWRQEPLKEKVEARVGLPVVVENDANAAAWGEYKFGGGKGHRNVICITLGTGLGGGIIIGNKLRRGHFGVAAEFGHIRMVPDGLLCGCGSQGCWEQYASGRALVRYAKQRANATPERAEVLLALGDGTPDGIEGKHISVAARQGCPVAVDSYRELARWAGAGLADLASLFDPSAFIVGGGLSDEGDLVLDPIRKSYKRWLVGGNWRPVADVIAAQLGNKAGLVGAADLAREPDPIM.

6 to 12 (GVDIGGT) is an ATP binding site.

The protein belongs to the ROK (NagC/XylR) family. Homooligomer (possibly a homotetramer). Alternatively, it may form a heterotetramer of two glucokinase subunits with two ORF2 (AC P40182) proteins.

Its subcellular location is the cytoplasm. The catalysed reaction is D-glucose + ATP = D-glucose 6-phosphate + ADP + H(+). A probable glucose kinase. Required for glucose repression of many different genes, restores glucose kinase activity in E.coli glk mutants. The chain is Glucokinase (glkA) from Streptomyces coelicolor (strain ATCC BAA-471 / A3(2) / M145).